The following is a 79-amino-acid chain: MPKRILQGVVVSDKNEKTVVVRVERRFAHPLLQKTVRRSKKYKAHDENNQYKVGDTVSIEECAPISKDKTWTVVSAQSK.

The protein belongs to the universal ribosomal protein uS17 family. As to quaternary structure, part of the 30S ribosomal subunit.

Its function is as follows. One of the primary rRNA binding proteins, it binds specifically to the 5'-end of 16S ribosomal RNA. This chain is Small ribosomal subunit protein uS17, found in Rhizobium rhizogenes (strain K84 / ATCC BAA-868) (Agrobacterium radiobacter).